We begin with the raw amino-acid sequence, 560 residues long: Serine palmitoyltransferase 2 (560 aa).

The helical transmembrane segment at 65–85 (PMLVAVLTYVGYGVLTLFGYL) threads the bilayer. Lysine 377 is subject to N6-(pyridoxal phosphate)lysine.

This sequence belongs to the class-II pyridoxal-phosphate-dependent aminotransferase family. In terms of assembly, component of the serine palmitoyltransferase (SPT) complex, which is composed of SPTLC1, SPTLC2 or SPTLC3 and SPTSSA or SPTSSB. The heterodimer consisting of SPTLC1 and SPTLC2/SPTLC3 forms the catalytic core of the enzyme, while SPTSSA or SPTSSB subunits determine substrate specificity. SPT also interacts with ORMDL proteins, especially ORMDL3, which negatively regulate SPT activity in the presence of ceramides. Forms dimers of heterodimers with SPTLC1. Requires pyridoxal 5'-phosphate as cofactor. Expressed in a variety of tissues. Expressed in brains cortices (at protein level). Expressed in brown and white adipose tissues. Expressed in liver.

It localises to the endoplasmic reticulum membrane. It catalyses the reaction L-serine + hexadecanoyl-CoA + H(+) = 3-oxosphinganine + CO2 + CoA. The catalysed reaction is octadecanoyl-CoA + L-serine + H(+) = 3-oxoeicosasphinganine + CO2 + CoA. It functions in the pathway lipid metabolism; sphingolipid metabolism. With respect to regulation, SPT complex catalytic activity is negatively regulated by ORMDL proteins, including ORMDL3, in the presence of ceramides. This mechanism allows to maintain ceramide levels at sufficient concentrations for the production of complex sphingolipids, but which prevents the accumulation of ceramides to levels that trigger apoptosis. Its function is as follows. Component of the serine palmitoyltransferase multisubunit enzyme (SPT) that catalyzes the initial and rate-limiting step in sphingolipid biosynthesis by condensing L-serine and activated acyl-CoA (most commonly palmitoyl-CoA) to form long-chain bases. The SPT complex is composed of SPTLC1, SPTLC2 or SPTLC3 and SPTSSA or SPTSSB. Within this complex, the heterodimer consisting of SPTLC1 and SPTLC2/SPTLC3 forms the catalytic core. The composition of the serine palmitoyltransferase (SPT) complex determines the substrate preference. The SPTLC1-SPTLC2-SPTSSA complex shows a strong preference for C16-CoA substrate, while the SPTLC1-SPTLC3-SPTSSA isozyme uses both C14-CoA and C16-CoA as substrates, with a slight preference for C14-CoA. The SPTLC1-SPTLC2-SPTSSB complex shows a strong preference for C18-CoA substrate, while the SPTLC1-SPTLC3-SPTSSB isozyme displays an ability to use a broader range of acyl-CoAs, without apparent preference. Crucial for adipogenesis. The polypeptide is Serine palmitoyltransferase 2 (Mus musculus (Mouse)).